Here is a 430-residue protein sequence, read N- to C-terminus: DNA repair protein recA homolog 3, mitochondrial (430 aa).

Residues 1–35 constitute a mitochondrion transit peptide; the sequence is MARILRNVYSLRSSLFSSELLRRSVVGTSFQLRGF. 119-126 is a binding site for ATP; sequence GPEASGKT. Positions 385–415 are disordered; sequence DEAADKETESESEEEDSLRVVVSPDNTDDES.

The protein belongs to the RecA family.

The protein resides in the mitochondrion. Its function is as follows. Involved in recombination ability and DNA strand transfer activity. The protein is DNA repair protein recA homolog 3, mitochondrial of Arabidopsis thaliana (Mouse-ear cress).